We begin with the raw amino-acid sequence, 296 residues long: MFS-type transporter pytF (296 aa).

7 helical membrane-spanning segments follow: residues 30–50 (WLVVLGGFLAYFVTFGMLNSF), 72–92 (WIGSLQLFLLFIGGLFFGPVF), 98–118 (KVLFIPGTLLLSLSQMMVSLC), 124–144 (FILAQSLLFGIAVAMLFYPTI), 157–177 (LAMGIVLTGSSLGGIAWPLIL), 180–200 (LFAVVGFPWGLRIVGFISFAL), and 238–258 (VVGMLFVIWGMFIPFYYIPLF). N-linked (GlcNAc...) asparagine glycosylation occurs at asparagine 265. Residues 271-291 (SLISILNAGSFVGRIVSGALA) traverse the membrane as a helical segment.

It belongs to the major facilitator superfamily. Monocarboxylate porter (TC 2.A.1.13) family.

It localises to the cell membrane. In terms of biological role, MFS-type transporter; part of the gene cluster that mediates the biosynthesis of pyranterreones, a family of antioxidative compounds. Directly involved in the secretion of pyranterreones. The sequence is that of MFS-type transporter pytF from Aspergillus terreus (strain NIH 2624 / FGSC A1156).